A 548-amino-acid polypeptide reads, in one-letter code: Phosphoglucomutase (548 aa).

Serine 135 serves as the catalytic Phosphoserine intermediate. Mg(2+)-binding residues include serine 135, aspartate 288, aspartate 290, and aspartate 292.

This sequence belongs to the phosphohexose mutase family. It depends on Mg(2+) as a cofactor.

It catalyses the reaction alpha-D-glucose 1-phosphate = alpha-D-glucose 6-phosphate. Its pathway is glycolipid metabolism; diglucosyl-diacylglycerol biosynthesis. In terms of biological role, catalyzes the interconversion between glucose-6-phosphate and alpha-glucose-1-phosphate. This is the first step in the biosynthesis of diglucosyl-diacylglycerol (Glc2-DAG), i.e. a glycolipid found in the membrane, which is also used as a membrane anchor for lipoteichoic acid (LTA). This is Phosphoglucomutase (pgcA) from Staphylococcus haemolyticus (strain JCSC1435).